A 112-amino-acid polypeptide reads, in one-letter code: Cornifelin homolog (112 aa).

The protein belongs to the cornifelin family.

The protein is Cornifelin homolog (cnfn) of Danio rerio (Zebrafish).